Here is a 214-residue protein sequence, read N- to C-terminus: tRNA (guanine-N(7)-)-methyltransferase (214 aa).

S-adenosyl-L-methionine-binding residues include D35, E60, N87, and D113. Residue D113 is part of the active site. Substrate-binding residues include K117 and D149.

The protein belongs to the class I-like SAM-binding methyltransferase superfamily. TrmB family.

The catalysed reaction is guanosine(46) in tRNA + S-adenosyl-L-methionine = N(7)-methylguanosine(46) in tRNA + S-adenosyl-L-homocysteine. It functions in the pathway tRNA modification; N(7)-methylguanine-tRNA biosynthesis. Functionally, catalyzes the formation of N(7)-methylguanine at position 46 (m7G46) in tRNA. The polypeptide is tRNA (guanine-N(7)-)-methyltransferase (Prochlorococcus marinus (strain NATL1A)).